A 485-amino-acid chain; its full sequence is Glutamate--tRNA ligase (485 aa).

The 'HIGH' region motif lies at Pro-12–Thr-22. The short motif at Lys-253–Arg-257 is the 'KMSKS' region element. Lys-256 contributes to the ATP binding site.

This sequence belongs to the class-I aminoacyl-tRNA synthetase family. Glutamate--tRNA ligase type 1 subfamily. Monomer.

Its subcellular location is the cytoplasm. The enzyme catalyses tRNA(Glu) + L-glutamate + ATP = L-glutamyl-tRNA(Glu) + AMP + diphosphate. Its function is as follows. Catalyzes the attachment of glutamate to tRNA(Glu) in a two-step reaction: glutamate is first activated by ATP to form Glu-AMP and then transferred to the acceptor end of tRNA(Glu). In Sinorhizobium medicae (strain WSM419) (Ensifer medicae), this protein is Glutamate--tRNA ligase.